The primary structure comprises 954 residues: Centrosomal protein of 112 kDa (954 aa).

The stretch at 276 to 954 (QKHDAEVQKI…EELTTYQSRR (679 aa)) forms a coiled coil.

The protein localises to the cytoplasm. It localises to the cytoskeleton. Its subcellular location is the microtubule organizing center. The protein resides in the centrosome. The sequence is that of Centrosomal protein of 112 kDa (Cep112) from Mus musculus (Mouse).